The chain runs to 182 residues: Large ribosomal subunit protein eL15 (182 aa).

It belongs to the eukaryotic ribosomal protein eL15 family.

This chain is Large ribosomal subunit protein eL15 (rpl15e), found in Methanothermobacter thermautotrophicus (strain ATCC 29096 / DSM 1053 / JCM 10044 / NBRC 100330 / Delta H) (Methanobacterium thermoautotrophicum).